We begin with the raw amino-acid sequence, 279 residues long: 3-methyl-2-oxobutanoate hydroxymethyltransferase (279 aa).

Residues aspartate 43 and aspartate 82 each contribute to the Mg(2+) site. 3-methyl-2-oxobutanoate contacts are provided by residues 43–44 (DS), aspartate 82, and lysine 112. Glutamate 114 is a Mg(2+) binding site. Glutamate 181 serves as the catalytic Proton acceptor.

It belongs to the PanB family. Homodecamer; pentamer of dimers. Requires Mg(2+) as cofactor.

It is found in the cytoplasm. It carries out the reaction 3-methyl-2-oxobutanoate + (6R)-5,10-methylene-5,6,7,8-tetrahydrofolate + H2O = 2-dehydropantoate + (6S)-5,6,7,8-tetrahydrofolate. Its pathway is cofactor biosynthesis; (R)-pantothenate biosynthesis; (R)-pantoate from 3-methyl-2-oxobutanoate: step 1/2. In terms of biological role, catalyzes the reversible reaction in which hydroxymethyl group from 5,10-methylenetetrahydrofolate is transferred onto alpha-ketoisovalerate to form ketopantoate. This Bacillus pumilus (strain SAFR-032) protein is 3-methyl-2-oxobutanoate hydroxymethyltransferase.